We begin with the raw amino-acid sequence, 236 residues long: MTNSLSAESARVGSGLRIGVLALQGDFREHLRAAAESGAEGVSVRRPRELDGLDGLIIPGGESTAIDKLARAFELAGPLRERIAGGLPVYGSCAGMILLASDIADPATDLSGAPQQTFGGLDMTVRRNAFGRQRESFETDLDFKGLEFSATDADVAPVHAVFIRGPWVERVGPGVEILAQVEPADPEHASHTAELPGAARIVAVRSGRLLATSFHPEVTGEKRVHELFIRMIRGEA.

61–63 contacts L-glutamine; it reads GES. C93 serves as the catalytic Nucleophile. L-glutamine is bound by residues R127 and 163 to 164; that span reads IR. Residues H215 and E217 each act as charge relay system in the active site.

Belongs to the glutaminase PdxT/SNO family. In terms of assembly, in the presence of PdxS, forms a dodecamer of heterodimers. Only shows activity in the heterodimer.

It carries out the reaction aldehydo-D-ribose 5-phosphate + D-glyceraldehyde 3-phosphate + L-glutamine = pyridoxal 5'-phosphate + L-glutamate + phosphate + 3 H2O + H(+). The enzyme catalyses L-glutamine + H2O = L-glutamate + NH4(+). Its pathway is cofactor biosynthesis; pyridoxal 5'-phosphate biosynthesis. In terms of biological role, catalyzes the hydrolysis of glutamine to glutamate and ammonia as part of the biosynthesis of pyridoxal 5'-phosphate. The resulting ammonia molecule is channeled to the active site of PdxS. This is Pyridoxal 5'-phosphate synthase subunit PdxT from Pseudarthrobacter chlorophenolicus (strain ATCC 700700 / DSM 12829 / CIP 107037 / JCM 12360 / KCTC 9906 / NCIMB 13794 / A6) (Arthrobacter chlorophenolicus).